Consider the following 98-residue polypeptide: NADH-ubiquinone oxidoreductase chain 4L (98 aa).

The next 3 membrane-spanning stretches (helical) occupy residues 1–21 (MPLISTNILLAFITALLGVLI), 26–46 (LMSSLLCLEGMMLSMFILVSL), and 61–81 (LILLVFAACEAAVGLALLVMV).

It belongs to the complex I subunit 4L family. Core subunit of respiratory chain NADH dehydrogenase (Complex I) which is composed of 45 different subunits.

Its subcellular location is the mitochondrion inner membrane. The enzyme catalyses a ubiquinone + NADH + 5 H(+)(in) = a ubiquinol + NAD(+) + 4 H(+)(out). In terms of biological role, core subunit of the mitochondrial membrane respiratory chain NADH dehydrogenase (Complex I) which catalyzes electron transfer from NADH through the respiratory chain, using ubiquinone as an electron acceptor. Part of the enzyme membrane arm which is embedded in the lipid bilayer and involved in proton translocation. The sequence is that of NADH-ubiquinone oxidoreductase chain 4L (MT-ND4L) from Nycticebus coucang (Slow loris).